Consider the following 164-residue polypeptide: Small ribosomal subunit protein uS5 (164 aa).

The S5 DRBM domain maps to 11 to 74 (LKEKLISVNR…EKARKNMIII (64 aa)).

This sequence belongs to the universal ribosomal protein uS5 family. In terms of assembly, part of the 30S ribosomal subunit. Contacts proteins S4 and S8.

In terms of biological role, with S4 and S12 plays an important role in translational accuracy. Its function is as follows. Located at the back of the 30S subunit body where it stabilizes the conformation of the head with respect to the body. The sequence is that of Small ribosomal subunit protein uS5 from Buchnera aphidicola subsp. Cinara cedri (strain Cc).